The primary structure comprises 114 residues: Flagellar hook-basal body complex protein FliE (114 aa).

Belongs to the FliE family.

It localises to the bacterial flagellum basal body. This Burkholderia lata (strain ATCC 17760 / DSM 23089 / LMG 22485 / NCIMB 9086 / R18194 / 383) protein is Flagellar hook-basal body complex protein FliE.